We begin with the raw amino-acid sequence, 526 residues long: Light-independent protochlorophyllide reductase subunit B (526 aa).

[4Fe-4S] cluster is bound at residue D36. Catalysis depends on D284, which acts as the Proton donor. 419–420 (GL) is a substrate binding site.

This sequence belongs to the ChlB/BchB/BchZ family. As to quaternary structure, protochlorophyllide reductase is composed of three subunits; BchL, BchN and BchB. Forms a heterotetramer of two BchB and two BchN subunits. It depends on [4Fe-4S] cluster as a cofactor.

The enzyme catalyses chlorophyllide a + oxidized 2[4Fe-4S]-[ferredoxin] + 2 ADP + 2 phosphate = protochlorophyllide a + reduced 2[4Fe-4S]-[ferredoxin] + 2 ATP + 2 H2O. Its pathway is porphyrin-containing compound metabolism; bacteriochlorophyll biosynthesis (light-independent). Its function is as follows. Component of the dark-operative protochlorophyllide reductase (DPOR) that uses Mg-ATP and reduced ferredoxin to reduce ring D of protochlorophyllide (Pchlide) to form chlorophyllide a (Chlide). This reaction is light-independent. The NB-protein (BchN-BchB) is the catalytic component of the complex. This chain is Light-independent protochlorophyllide reductase subunit B, found in Halorhodospira halophila (strain DSM 244 / SL1) (Ectothiorhodospira halophila (strain DSM 244 / SL1)).